Consider the following 738-residue polypeptide: Integrin beta-2-like protein (738 aa).

The first 22 residues, 1–22 (MLGQCTLLPVLAGLLSLESALS), serve as a signal peptide directing secretion. The Extracellular segment spans residues 23-671 (QLCTKDNVST…LVCAEISNTT (649 aa)). The PSI domain occupies 24–74 (LCTKDNVSTCQDCIRSGPSCAWCQKLNFTGRGEPDSVRCDTPEQLLLKGCT). 23 cysteine pairs are disulfide-bonded: cysteine 25–cysteine 419, cysteine 33–cysteine 43, cysteine 36–cysteine 73, cysteine 46–cysteine 62, cysteine 218–cysteine 258, cysteine 358–cysteine 372, cysteine 421–cysteine 439, cysteine 431–cysteine 442, cysteine 444–cysteine 453, cysteine 455–cysteine 486, cysteine 469–cysteine 484, cysteine 478–cysteine 489, cysteine 491–cysteine 506, cysteine 508–cysteine 531, cysteine 513–cysteine 529, cysteine 521–cysteine 534, cysteine 536–cysteine 545, cysteine 547–cysteine 570, cysteine 554–cysteine 568, cysteine 562–cysteine 573, cysteine 575–cysteine 584, cysteine 594–cysteine 603, and cysteine 600–cysteine 664. N-linked (GlcNAc...) asparagine glycosylation is present at asparagine 29. 8 N-linked (GlcNAc...) asparagine glycosylation sites follow: asparagine 50, asparagine 102, asparagine 173, asparagine 226, asparagine 252, asparagine 342, asparagine 360, and asparagine 386. The VWFA domain occupies 126–329 (SVDLYFLMGL…DSSNVAQLIR (204 aa)). 4 consecutive I-EGF domains span residues 421 to 454 (CQEQSQHHSLCGGKGAMECGICRCNSGYAGKNCE), 455 to 507 (CQTQ…QYCE), 508 to 546 (CNNVNCERYDGQVCGGPERGHCSCGRCFCRYGFVGSACQ), and 547 to 585 (CRMSTSGCLNNRMVECSGHGRCYCNRCLCDPGYQPPLCE). Asparagine 473 carries N-linked (GlcNAc...) asparagine glycosylation. Residues asparagine 627 and asparagine 669 are each glycosylated (N-linked (GlcNAc...) asparagine). The helical transmembrane segment at 672-692 (ILLGVIVGVLLAVIFLLVYCM) threads the bilayer. At 693–738 (VYLKGTQKAAKLPRKGGAQSTLAQQPHFQEPHHVEPVWNQERQGTQ) the chain is on the cytoplasmic side. The tract at residues 709–738 (GAQSTLAQQPHFQEPHHVEPVWNQERQGTQ) is disordered. A compositionally biased stretch (polar residues) spans 710–719 (AQSTLAQQPH).

Belongs to the integrin beta chain family. As to quaternary structure, monomer and homodimer. Unlike integrin beta chains, no alpha chain partner has yet been found. In terms of processing, N-glycosylated. In terms of tissue distribution, expressed predominantly in maturing and mature neutrophils.

It localises to the cell membrane. Functionally, during inflammatory stimulation, plays a role in retaining Cxcl13-expressing cells at the site of the inflammatory response. This is Integrin beta-2-like protein from Mus musculus (Mouse).